The primary structure comprises 187 residues: Ubiquinol-cytochrome c reductase iron-sulfur subunit (187 aa).

Residues 15–35 traverse the membrane as a helical segment; the sequence is LYYATAGAGAVATGAAVWPLI. One can recognise a Rieske domain in the interval 89 to 185; sequence QLGQLVDTNA…AKFIDETTIQ (97 aa). Residues Cys-129, His-131, Cys-149, and His-152 each coordinate [2Fe-2S] cluster. An intrachain disulfide couples Cys-134 to Cys-151.

The protein belongs to the Rieske iron-sulfur protein family. As to quaternary structure, the main subunits of complex b-c1 are: cytochrome b, cytochrome c1 and the Rieske protein. [2Fe-2S] cluster serves as cofactor.

The protein localises to the cell membrane. The catalysed reaction is a quinol + 2 Fe(III)-[cytochrome c](out) = a quinone + 2 Fe(II)-[cytochrome c](out) + 2 H(+)(out). Functionally, component of the ubiquinol-cytochrome c reductase complex (complex III or cytochrome b-c1 complex), which is a respiratory chain that generates an electrochemical potential coupled to ATP synthesis. This chain is Ubiquinol-cytochrome c reductase iron-sulfur subunit (petA), found in Cereibacter sphaeroides (Rhodobacter sphaeroides).